The following is a 263-amino-acid chain: 3-methyl-2-oxobutanoate hydroxymethyltransferase (263 aa).

Mg(2+) contacts are provided by aspartate 43 and aspartate 82. 3-methyl-2-oxobutanoate is bound by residues 43-44 (DS), aspartate 82, and lysine 111. Residue glutamate 113 coordinates Mg(2+). The Proton acceptor role is filled by glutamate 179.

Belongs to the PanB family. As to quaternary structure, homodecamer; pentamer of dimers. Requires Mg(2+) as cofactor.

It localises to the cytoplasm. It carries out the reaction 3-methyl-2-oxobutanoate + (6R)-5,10-methylene-5,6,7,8-tetrahydrofolate + H2O = 2-dehydropantoate + (6S)-5,6,7,8-tetrahydrofolate. It functions in the pathway cofactor biosynthesis; (R)-pantothenate biosynthesis; (R)-pantoate from 3-methyl-2-oxobutanoate: step 1/2. Its function is as follows. Catalyzes the reversible reaction in which hydroxymethyl group from 5,10-methylenetetrahydrofolate is transferred onto alpha-ketoisovalerate to form ketopantoate. This is 3-methyl-2-oxobutanoate hydroxymethyltransferase from Neisseria gonorrhoeae (strain ATCC 700825 / FA 1090).